Reading from the N-terminus, the 603-residue chain is MSSEHIQNKLALLPDQPGCYLMKDRQGTIIYVGKAKVLKNRVRSYFSGTHDSKTQRLVQEIVDFEYIVTSSNVEALLLEINLIKKHDPRFNIRLKDDKTYPFIKITNERHPRLIITRQVKKDKGKYFGPYPNVYAANEVKRILDRLYPLRKCSTLPNKVCLYYHLGQCLAPCVFDVEASKYKEMQDEIVAFLNGGYKTVKNDLMKKMQEAAENMEFEKAGEFRDQINAIETTMEKQKMTMNDFVDRDVFGYAIDKGWMCVQVFFIRQGKLIERDVSQFPFYNDADEDFLTFIGQFYQKANHIPPKEIYLPDDVDSEAVQAVVPDTKIIVPQRGNKKELVKLAYKNAKIALNEKFMLLERNEERTVGAVERLGEAMGIPTPSRVEAFDNSNIHGTDPVSAMVTFLDGKPSKNDYRKYKIKTVEGPDDYATMREVIRRRYWRVLKEGLPMPDLILIDGGKGQIDSAKDVLTNELGLDIPVAGLAKDDKHRTSQLLFGDPLEIVPLERNSQEFYLLQRMQDEVHRFAITFHRQLRSKTGFQSILDGIPGVGPGRKKKLLKHFGSMKKLKEASVEEIKEAGVPLNVAEEVHKHITAFNEKAKNTEQK.

The region spanning 15–92 (DQPGCYLMKD…IKKHDPRFNI (78 aa)) is the GIY-YIG domain. In terms of domain architecture, UVR spans 197 to 232 (KTVKNDLMKKMQEAAENMEFEKAGEFRDQINAIETT).

This sequence belongs to the UvrC family. As to quaternary structure, interacts with UvrB in an incision complex.

The protein localises to the cytoplasm. The UvrABC repair system catalyzes the recognition and processing of DNA lesions. UvrC both incises the 5' and 3' sides of the lesion. The N-terminal half is responsible for the 3' incision and the C-terminal half is responsible for the 5' incision. The chain is UvrABC system protein C from Listeria innocua serovar 6a (strain ATCC BAA-680 / CLIP 11262).